A 154-amino-acid chain; its full sequence is Protein FAM162A (154 aa).

Residues 76–102 form a required for proapoptotic activity region; it reads RFKKEDEIPETVSLEMLDAAKNKMRVK. A helical transmembrane segment spans residues 103 to 120; sequence ISYLMIALTVVGCIFMVI.

It belongs to the UPF0389 family. In terms of assembly, interacts with HSP90AB1; HSP90AB1 is essential for FAM162A mitochondrial localization and pro-apoptotic activity. Interacts with VDAC2; the interaction is probably involved in inducing mitochondrial permeability transition.

The protein localises to the mitochondrion membrane. Proposed to be involved in regulation of apoptosis; the exact mechanism may differ between cell types/tissues. May be involved in hypoxia-induced cell death of transformed cells implicating cytochrome C release and caspase activation (such as CASP9) and inducing mitochondrial permeability transition. May be involved in hypoxia-induced cell death of neuronal cells probably by promoting release of AIFM1 from mitochondria to cytoplasm and its translocation to the nucleus; however, the involvement of caspases has been reported conflictingly. This is Protein FAM162A (FAM162A) from Homo sapiens (Human).